The following is a 374-amino-acid chain: UDP-N-acetylglucosamine--N-acetylmuramyl-(pentapeptide) pyrophosphoryl-undecaprenol N-acetylglucosamine transferase (374 aa).

Residues 14-16 (TGG), asparagine 125, arginine 168, serine 196, and glutamine 297 contribute to the UDP-N-acetyl-alpha-D-glucosamine site.

Belongs to the glycosyltransferase 28 family. MurG subfamily.

The protein localises to the cell inner membrane. It carries out the reaction di-trans,octa-cis-undecaprenyl diphospho-N-acetyl-alpha-D-muramoyl-L-alanyl-D-glutamyl-meso-2,6-diaminopimeloyl-D-alanyl-D-alanine + UDP-N-acetyl-alpha-D-glucosamine = di-trans,octa-cis-undecaprenyl diphospho-[N-acetyl-alpha-D-glucosaminyl-(1-&gt;4)]-N-acetyl-alpha-D-muramoyl-L-alanyl-D-glutamyl-meso-2,6-diaminopimeloyl-D-alanyl-D-alanine + UDP + H(+). The protein operates within cell wall biogenesis; peptidoglycan biosynthesis. In terms of biological role, cell wall formation. Catalyzes the transfer of a GlcNAc subunit on undecaprenyl-pyrophosphoryl-MurNAc-pentapeptide (lipid intermediate I) to form undecaprenyl-pyrophosphoryl-MurNAc-(pentapeptide)GlcNAc (lipid intermediate II). The chain is UDP-N-acetylglucosamine--N-acetylmuramyl-(pentapeptide) pyrophosphoryl-undecaprenol N-acetylglucosamine transferase from Rhodopseudomonas palustris (strain BisA53).